The chain runs to 125 residues: Small ribosomal subunit protein uS12 (125 aa).

A disordered region spans residues 1 to 28; that stretch reads MPTINQLVRKGREKVKKKSKAPALEGNP. Basic residues predominate over residues 9–20; sequence RKGREKVKKKSK. Position 89 is a 3-methylthioaspartic acid (aspartate 89). Residues 104-125 form a disordered region; the sequence is AAGVKDRKQSRSKYGTKRPKEK. A compositionally biased stretch (basic residues) spans 113–125; that stretch reads SRSKYGTKRPKEK.

The protein belongs to the universal ribosomal protein uS12 family. In terms of assembly, part of the 30S ribosomal subunit. Contacts proteins S8 and S17. May interact with IF1 in the 30S initiation complex.

With S4 and S5 plays an important role in translational accuracy. Its function is as follows. Interacts with and stabilizes bases of the 16S rRNA that are involved in tRNA selection in the A site and with the mRNA backbone. Located at the interface of the 30S and 50S subunits, it traverses the body of the 30S subunit contacting proteins on the other side and probably holding the rRNA structure together. The combined cluster of proteins S8, S12 and S17 appears to hold together the shoulder and platform of the 30S subunit. In Persephonella marina (strain DSM 14350 / EX-H1), this protein is Small ribosomal subunit protein uS12.